The following is a 243-amino-acid chain: Probable transcriptional regulator ycf27 (243 aa).

The region spanning 7–120 (KILVVDDEAS…ELEARIRSVL (114 aa)) is the Response regulatory domain. Asp56 carries the post-translational modification 4-aspartylphosphate. The H-T-H motif DNA-binding region spans 76-94 (DVPIIMLTALGEVCDRITG). A DNA-binding region (ompR/PhoB-type) is located at residues 135–236 (SGIISIGFLK…ARGTGYLFQR (102 aa)).

It is found in the plastid. It localises to the chloroplast. Its function is as follows. Probable promoter-specific protein mediating the interaction between DNA and RNA polymerase. The protein is Probable transcriptional regulator ycf27 (ycf27) of Porphyra purpurea (Red seaweed).